A 311-amino-acid chain; its full sequence is Class E basic helix-loop-helix protein 22 (311 aa).

The interval 22–170 is disordered; sequence AKRMESAFRS…GGSKKSKEQK (149 aa). Over residues 81-96 the composition is skewed to low complexity; it reads GESASRSSVAESSGGE. A compositionally biased stretch (gly residues) spans 125–147; it reads AGGGGGGGGGGGGGPGGGGGGGL. One can recognise a bHLH domain in the interval 171–225; it reads ALRLNINARERRRMHDLNDALDELRAVIPYAHSPSVRKLSKIATLLLAKNYILMQ.

The protein localises to the nucleus. Functionally, may act as a transcriptional repressor. The polypeptide is Class E basic helix-loop-helix protein 22 (BHLHE22) (Gallus gallus (Chicken)).